The chain runs to 1006 residues: DNA polymerase (1006 aa).

Belongs to the DNA polymerase type-B family. Interacts with OPG148. Component of the Uracil-DNA glycosylase(UDG)-OPG148-polymerase complex; OPG148 and OPG116/UDG form a heterodimeric processivity factor that associates with OPG071 to form the processive polymerase holoenzyme.

It catalyses the reaction DNA(n) + a 2'-deoxyribonucleoside 5'-triphosphate = DNA(n+1) + diphosphate. Functionally, catalyzes DNA synthesis. Acquires processivity by associating with a heterodimeric processivity factor comprised of the viral OPG148 and OPG116 proteins, thereby forming the DNA polymerase holoenzyme. Displays 3'- to 5' exonuclease activity. Might participate in viral DNA recombination. Does not perform OPG116/D4synthesis across an abasic site. This chain is DNA polymerase (OPG071), found in Homo sapiens (Human).